We begin with the raw amino-acid sequence, 442 residues long: Exodeoxyribonuclease 7 large subunit (442 aa).

The protein belongs to the XseA family. In terms of assembly, heterooligomer composed of large and small subunits.

The protein localises to the cytoplasm. It carries out the reaction Exonucleolytic cleavage in either 5'- to 3'- or 3'- to 5'-direction to yield nucleoside 5'-phosphates.. Its function is as follows. Bidirectionally degrades single-stranded DNA into large acid-insoluble oligonucleotides, which are then degraded further into small acid-soluble oligonucleotides. The polypeptide is Exodeoxyribonuclease 7 large subunit (Shewanella woodyi (strain ATCC 51908 / MS32)).